The following is a 185-amino-acid chain: Avirulence protein ATR39-1 (185 aa).

The N-terminal stretch at 1 to 20 is a signal peptide; that stretch reads MVKCTPLLALTVIVSAGSDA. Residues 49-66 carry the RxLR-dEER motif; the sequence is RVLRASDVPDEVAAGESR.

Belongs to the RxLR effector family.

It is found in the secreted. It localises to the host cell. Its function is as follows. Secreted effector that acts as an elicitor of hypersensitive response (HR) specifically on plants carrying defense protein RPP39. The allele ATR39-1 is recognized by RPP39, whereas the ATR39-2 allele is not recognized. The chain is Avirulence protein ATR39-1 from Hyaloperonospora arabidopsidis (strain Emoy2) (Downy mildew agent).